Consider the following 359-residue polypeptide: Protein mab-21-like 2-A (359 aa).

It belongs to the mab-21 family.

It localises to the nucleus. It is found in the cytoplasm. In terms of biological role, required for normal development of the eye. May promote dorsalization of the developing embryo by antagonizing the ventralizing factor bmp4. Functional antagonism of bmp4 may require interaction with smad1. Required for gastrulation and subsequent neural development. May function as a transcriptional repressor. The polypeptide is Protein mab-21-like 2-A (mab21l2-a) (Xenopus laevis (African clawed frog)).